Reading from the N-terminus, the 298-residue chain is Ribosomal protein L11 methyltransferase (298 aa).

S-adenosyl-L-methionine contacts are provided by threonine 152, glycine 176, aspartate 198, and asparagine 236.

Belongs to the methyltransferase superfamily. PrmA family.

The protein localises to the cytoplasm. The catalysed reaction is L-lysyl-[protein] + 3 S-adenosyl-L-methionine = N(6),N(6),N(6)-trimethyl-L-lysyl-[protein] + 3 S-adenosyl-L-homocysteine + 3 H(+). Functionally, methylates ribosomal protein L11. The polypeptide is Ribosomal protein L11 methyltransferase (Polaromonas sp. (strain JS666 / ATCC BAA-500)).